The chain runs to 401 residues: MEEKRENTNSIYIVPELLEDIFLRLPLKSILKFKTVSRQWRSILESKLFVERRGNLQKHHRKILAAYNCNYFMRPSIFPESRFEGDEEIVYLHCDAAQPSMTCDGLLCITEPGWFNVLNPSAGQLRRFPPGPGPVKGPQENWLLGFGRDNVTGRYKIVRMCFHDCYEFGILDIETGVWSKLRSPPHNMLPGSKSVCVNGSIYWLQISAGYIILAMDLHEESYHGVHHLPATWVTQETQLVNLEDRLAMAMTTNVGPEWILEIWSMDIEGKGWSKGYSWSKSYSISLAHGVGFSWPWQKRWFTPVWVSKQGNLLFYDNHKRLFKYYSGTDEIRCLSSNICVISSYVENLAPLPLKPSHTHHDLGNSNSKFSTSRCHLFPTRGSWISKVLFTSILFGYICLPL.

Residues 7-53 (NTNSIYIVPELLEDIFLRLPLKSILKFKTVSRQWRSILESKLFVERR) enclose the F-box domain.

In Arabidopsis thaliana (Mouse-ear cress), this protein is F-box protein At2g43440.